The sequence spans 516 residues: Polyprenol-phosphate-mannose--protein mannosyltransferase (516 aa).

Residues 1–11 (MTALDTDTPTA) are compositionally biased toward polar residues. The interval 1-23 (MTALDTDTPTAGRSAPLISPGPV) is disordered. The next 9 membrane-spanning stretches (helical) occupy residues 113-133 (YNGL…VMLV), 143-163 (STLV…SFVS), 166-186 (TALL…CLMV), 234-254 (WSGL…DAIA), 275-295 (AAYV…APWF), 384-404 (VMLV…GWAL), 413-433 (WRYG…FADI), 437-457 (MYFF…ALIL), and 473-493 (LGLL…AWMY).

This sequence belongs to the glycosyltransferase 39 family.

The protein localises to the cell membrane. It functions in the pathway protein modification; protein glycosylation. Protein O-mannosyltransferase that catalyzes the transfer of a single mannose residue from a polyprenol phospho-mannosyl lipidic donor to the hydroxyl group of selected serine and threonine residues in acceptor proteins. Involved in DNA conjugation, in at least the recipient strain. This is Polyprenol-phosphate-mannose--protein mannosyltransferase (pmt) from Mycolicibacterium smegmatis (strain MKD8) (Mycobacterium smegmatis).